The following is a 495-amino-acid chain: Aspartyl/glutamyl-tRNA(Asn/Gln) amidotransferase subunit B (495 aa).

It belongs to the GatB/GatE family. GatB subfamily. As to quaternary structure, heterotrimer of A, B and C subunits.

The enzyme catalyses L-glutamyl-tRNA(Gln) + L-glutamine + ATP + H2O = L-glutaminyl-tRNA(Gln) + L-glutamate + ADP + phosphate + H(+). It carries out the reaction L-aspartyl-tRNA(Asn) + L-glutamine + ATP + H2O = L-asparaginyl-tRNA(Asn) + L-glutamate + ADP + phosphate + 2 H(+). Allows the formation of correctly charged Asn-tRNA(Asn) or Gln-tRNA(Gln) through the transamidation of misacylated Asp-tRNA(Asn) or Glu-tRNA(Gln) in organisms which lack either or both of asparaginyl-tRNA or glutaminyl-tRNA synthetases. The reaction takes place in the presence of glutamine and ATP through an activated phospho-Asp-tRNA(Asn) or phospho-Glu-tRNA(Gln). This Crocosphaera subtropica (strain ATCC 51142 / BH68) (Cyanothece sp. (strain ATCC 51142)) protein is Aspartyl/glutamyl-tRNA(Asn/Gln) amidotransferase subunit B.